A 68-amino-acid polypeptide reads, in one-letter code: Venom peptide 3 (68 aa).

Positions 1–25 (MTKQSIVIVLFAAIAMMACLQRVTA) are cleaved as a signal peptide. AXPX repeat units follow at residues 25 to 28 (AEPA), 33 to 36 (AAPI), 37 to 40 (AEPY), 41 to 44 (ANPE), and 47 to 50 (ASPE). Positions 26-51 (EPAPEPIAAPIAEPYANPEAIASPEA) are excised as a propeptide. At Leu65 the chain carries Leucine amide.

In terms of tissue distribution, expressed by the venom gland.

The protein resides in the secreted. It is found in the target cell membrane. Functionally, antimicrobial peptide with strong activity against the fungi B.cinerea (MIC=5 uM) and C.albicans (MIC=33 uM), and no activity against the Gram-negative bacterium E.coli (MIC&gt;200 uM) and the Gram-positive bacterium S.aureus (MIC&gt;200 uM). Shows cytolytic activity against insect cell lines. Has no hemolytic activity against human erythrocytes. In vivo, peptide injection in the vicinity of the head and thorax of lepidopteran larvae induces feeding disorder that lasts one or two days before recovering. The chain is Venom peptide 3 from Orancistrocerus drewseni (Solitary wasp).